Reading from the N-terminus, the 580-residue chain is Acyl--CoA ligase GME11374 (580 aa).

Belongs to the ATP-dependent AMP-binding enzyme family.

The protein operates within secondary metabolite biosynthesis. Its function is as follows. Acyl--CoA ligase; part of the gene cluster that mediates the biosynthesis of dibenzodioxocinones such as pestalotiollide B, a novel class of inhibitors against cholesterol ester transfer protein (CEPT). The biosynthesis initiates from condensation of acetate and malonate units catalyzed by the non-reducing PKS pks8/GME11356. Pks8/GME11356 lacks a thioesterase (TE) domain, which is important to the cyclizing of the third ring of atrochrysone carboxylic acid, and the esterase GME11355 might play the role of TE and catalyzes the cyclization reaction of the C ring. The lactamase-like protein GME11357 (or other beta-lactamases in Pestalotiopsis microspora) probably hydrolyzes the thioester bond between the ACP of pks8/GME11356 and the intermediate to release atrochrysone carboxylic acid, which is spontaneously dehydrates to form endocrocin anthrone. Endocrocin anthrone is further converted to emodin via the endocrocin intermediate. Emodin is then oxidized by several enzymes such as the Baeyer-Villiger oxidase GME11358, the oxidoreductase GME11367, the short chain dehydrogenase/reductase GME11373, as well as by other oxidoreductases from the cluster, to modify the A and C rings and open the B ring, and finally yield monodictyphenone. The prenyltransferase GME11375 may catalyze the addition reaction between the C5 side chains and the carbon bone of dibenzodioxocinones. The remaining biochemical reactions to the final product dibenzodioxocinones should be methylation catalyzed by methyltransferase GME11366 and reduction and lactonization reaction catalyzed by a series of oxidordeuctases. The chain is Acyl--CoA ligase GME11374 from Pestalotiopsis microspora.